A 107-amino-acid chain; its full sequence is Large ribosomal subunit protein uL24 (107 aa).

Belongs to the universal ribosomal protein uL24 family. In terms of assembly, part of the 50S ribosomal subunit.

Its function is as follows. One of two assembly initiator proteins, it binds directly to the 5'-end of the 23S rRNA, where it nucleates assembly of the 50S subunit. Functionally, one of the proteins that surrounds the polypeptide exit tunnel on the outside of the subunit. The sequence is that of Large ribosomal subunit protein uL24 from Nitratidesulfovibrio vulgaris (strain ATCC 29579 / DSM 644 / CCUG 34227 / NCIMB 8303 / VKM B-1760 / Hildenborough) (Desulfovibrio vulgaris).